A 264-amino-acid chain; its full sequence is Late embryogenesis abundant protein D-34 (264 aa).

Residues 1–16 are compositionally biased toward low complexity; the sequence is MSQGQPRRPQQPAGQG. Positions 1 to 23 are disordered; sequence MSQGQPRRPQQPAGQGENQEPIK. SMP domains follow at residues 22–76, 138–194, and 203–261; these read IKYG…RNEQ, ITIG…AHNA, and IKLN…LNEN.

It belongs to the LEA type SMP family.

LEA proteins are late embryonic proteins abundant in higher plant seed embryos. There are two subsets of LEA proteins (5a and 5b), the first ones are expressed when the cotyledon weight reach 80 mg and the second set are expressed above 100 mg. The function of those proteins is not known. This Gossypium hirsutum (Upland cotton) protein is Late embryogenesis abundant protein D-34.